Consider the following 139-residue polypeptide: D-ribose pyranase (139 aa).

The active-site Proton donor is the histidine 20. Substrate is bound by residues aspartate 28, histidine 106, and 128-130; that span reads YAN.

It belongs to the RbsD / FucU family. RbsD subfamily. As to quaternary structure, homodecamer.

The protein resides in the cytoplasm. The enzyme catalyses beta-D-ribopyranose = beta-D-ribofuranose. It participates in carbohydrate metabolism; D-ribose degradation; D-ribose 5-phosphate from beta-D-ribopyranose: step 1/2. Catalyzes the interconversion of beta-pyran and beta-furan forms of D-ribose. The protein is D-ribose pyranase of Escherichia coli O6:H1 (strain CFT073 / ATCC 700928 / UPEC).